Consider the following 423-residue polypeptide: Dihydrolipoyllysine-residue succinyltransferase component of 2-oxoglutarate dehydrogenase complex (423 aa).

The Lipoyl-binding domain occupies 1–76 (MPEVKVPELA…EVGQAIAVIG (76 aa)). Residue K42 is modified to N6-lipoyllysine. The tract at residues 76–185 (GEGSGNASKE…APAKEEKKYN (110 aa)) is disordered. Positions 80–96 (GNASKENSNDNTPQQND) are enriched in polar residues. Residues 99 to 115 (TNNKKEETTNKSADKAE) are compositionally biased toward basic and acidic residues. The span at 116 to 131 (VNQTNDDNQQRVNATP) shows a compositional bias: polar residues. A Peripheral subunit-binding (PSBD) domain is found at 128-164 (NATPSARRYARENGVNLAEVSPKTNDVVRKEDIDKKQ). Positions 153 to 164 (DVVRKEDIDKKQ) are enriched in basic and acidic residues. Residues 165–177 (QAPASTQTTQQAP) show a composition bias toward low complexity. Active-site residues include H394 and D398.

It belongs to the 2-oxoacid dehydrogenase family. In terms of assembly, forms a 24-polypeptide structural core with octahedral symmetry. Part of the 2-oxoglutarate dehydrogenase (OGDH) complex composed of E1 (2-oxoglutarate dehydrogenase), E2 (dihydrolipoamide succinyltransferase) and E3 (dihydrolipoamide dehydrogenase); the complex contains multiple copies of the three enzymatic components (E1, E2 and E3). The cofactor is (R)-lipoate.

It carries out the reaction N(6)-[(R)-dihydrolipoyl]-L-lysyl-[protein] + succinyl-CoA = N(6)-[(R)-S(8)-succinyldihydrolipoyl]-L-lysyl-[protein] + CoA. It participates in amino-acid degradation; L-lysine degradation via saccharopine pathway; glutaryl-CoA from L-lysine: step 6/6. Its function is as follows. E2 component of the 2-oxoglutarate dehydrogenase (OGDH) complex which catalyzes the second step in the conversion of 2-oxoglutarate to succinyl-CoA and CO(2). This is Dihydrolipoyllysine-residue succinyltransferase component of 2-oxoglutarate dehydrogenase complex (odhB) from Staphylococcus aureus (strain MRSA252).